Reading from the N-terminus, the 166-residue chain is CDP-archaeol synthase (166 aa).

The next 4 helical transmembrane spans lie at 42–62, 73–93, 104–124, and 128–148; these read FFGG…AATA, FLSV…KSFL, SWFL…ILIF, and WLFG…TPLL.

It belongs to the CDP-archaeol synthase family. Mg(2+) serves as cofactor.

The protein resides in the cell membrane. It carries out the reaction 2,3-bis-O-(geranylgeranyl)-sn-glycerol 1-phosphate + CTP + H(+) = CDP-2,3-bis-O-(geranylgeranyl)-sn-glycerol + diphosphate. The protein operates within membrane lipid metabolism; glycerophospholipid metabolism. In terms of biological role, catalyzes the formation of CDP-2,3-bis-(O-geranylgeranyl)-sn-glycerol (CDP-archaeol) from 2,3-bis-(O-geranylgeranyl)-sn-glycerol 1-phosphate (DGGGP) and CTP. This reaction is the third ether-bond-formation step in the biosynthesis of archaeal membrane lipids. This Methanoculleus marisnigri (strain ATCC 35101 / DSM 1498 / JR1) protein is CDP-archaeol synthase.